A 452-amino-acid polypeptide reads, in one-letter code: UDP-N-acetylmuramoylalanine--D-glutamate ligase (452 aa).

115-121 (GTNGKTT) is an ATP binding site.

This sequence belongs to the MurCDEF family.

The protein resides in the cytoplasm. The catalysed reaction is UDP-N-acetyl-alpha-D-muramoyl-L-alanine + D-glutamate + ATP = UDP-N-acetyl-alpha-D-muramoyl-L-alanyl-D-glutamate + ADP + phosphate + H(+). Its pathway is cell wall biogenesis; peptidoglycan biosynthesis. Cell wall formation. Catalyzes the addition of glutamate to the nucleotide precursor UDP-N-acetylmuramoyl-L-alanine (UMA). This chain is UDP-N-acetylmuramoylalanine--D-glutamate ligase, found in Elusimicrobium minutum (strain Pei191).